The sequence spans 561 residues: uncharacterized protein (561 aa).

The next 2 membrane-spanning stretches (helical) occupy residues 29–49 and 80–100; these read FIFN…KKII and FLFH…AVVI.

The protein localises to the cell membrane. This is an uncharacterized protein from Mycoplasma pneumoniae (strain ATCC 29342 / M129 / Subtype 1) (Mycoplasmoides pneumoniae).